The primary structure comprises 476 residues: Ubiquinone biosynthesis monooxygenase COQ6, mitochondrial (476 aa).

Residues 1 to 42 constitute a mitochondrion transit peptide; it reads MAARIGPMAGLLCVRWWSTAQLAARGGPLVACRRWTSSSTDS.

It belongs to the UbiH/COQ6 family. Component of a multi-subunit COQ enzyme complex, composed of at least COQ3, COQ4, COQ5, COQ6, COQ7 and COQ9. Interacts with COQ8B and COQ7. FAD serves as cofactor. In terms of tissue distribution, in the kidney, expressed almost exclusively in glomerular podocytes. In the inner ear, expressed in the spiral ganglion, as well as in stria vascularis and spiral ligament cells.

Its subcellular location is the mitochondrion inner membrane. It is found in the golgi apparatus. It localises to the cell projection. It carries out the reaction 4-hydroxy-3-(all-trans-decaprenyl)benzoate + 2 reduced [2Fe-2S]-[ferredoxin] + O2 + 2 H(+) = 3,4-dihydroxy-5-(all-trans-decaprenyl)benzoate + 2 oxidized [2Fe-2S]-[ferredoxin] + H2O. It catalyses the reaction 2-methoxy-6-(all-trans-decaprenyl)phenol + 2 reduced [2Fe-2S]-[ferredoxin] + O2 + 2 H(+) = 2-methoxy-6-(all-trans-decaprenyl)benzene-1,4-diol + 2 oxidized [2Fe-2S]-[ferredoxin] + H2O. It functions in the pathway cofactor biosynthesis; ubiquinone biosynthesis. FAD-dependent monooxygenase required for two non-consecutive steps during ubiquinone biosynthesis. Required for the C5-ring hydroxylation during ubiquinone biosynthesis by catalyzing the hydroxylation of 4-hydroxy-3-(all-trans-decaprenyl)benzoic acid to 3,4-dihydroxy-5-(all-trans-decaprenyl)benzoic acid. Also acts downstream of COQ4, for the C1-hydroxylation during ubiquinone biosynthesis by catalyzing the hydroxylation of 2-methoxy-6-(all-trans-decaprenyl)phenol to 2-methoxy-6-(all-trans-decaprenyl)benzene-1,4-diol. The electrons required for the hydroxylation reaction are funneled indirectly to COQ6 from NADPH via a ferredoxin/ferredoxin reductase system composed of FDX2 and FDXR. This Rattus norvegicus (Rat) protein is Ubiquinone biosynthesis monooxygenase COQ6, mitochondrial.